The primary structure comprises 195 residues: Pyridoxal 5'-phosphate synthase subunit PdxT (195 aa).

46–48 (GES) serves as a coordination point for L-glutamine. The active-site Nucleophile is Cys78. L-glutamine is bound by residues Arg105 and 133–134 (IR). Residues His169 and Glu171 each act as charge relay system in the active site.

The protein belongs to the glutaminase PdxT/SNO family. In the presence of PdxS, forms a dodecamer of heterodimers. Only shows activity in the heterodimer.

It carries out the reaction aldehydo-D-ribose 5-phosphate + D-glyceraldehyde 3-phosphate + L-glutamine = pyridoxal 5'-phosphate + L-glutamate + phosphate + 3 H2O + H(+). The enzyme catalyses L-glutamine + H2O = L-glutamate + NH4(+). Its pathway is cofactor biosynthesis; pyridoxal 5'-phosphate biosynthesis. Catalyzes the hydrolysis of glutamine to glutamate and ammonia as part of the biosynthesis of pyridoxal 5'-phosphate. The resulting ammonia molecule is channeled to the active site of PdxS. This chain is Pyridoxal 5'-phosphate synthase subunit PdxT, found in Shouchella clausii (strain KSM-K16) (Alkalihalobacillus clausii).